The sequence spans 501 residues: Glycerol kinase 1 (501 aa).

T16 is an ADP binding site. The ATP site is built by T16, T17, and S18. Residue T16 participates in sn-glycerol 3-phosphate binding. ADP is bound at residue R20. Positions 84, 85, 135, and 242 each coordinate sn-glycerol 3-phosphate. Positions 84, 85, 135, 242, and 243 each coordinate glycerol. T264 and G307 together coordinate ADP. 4 residues coordinate ATP: T264, G307, Q311, and G408. G408 serves as a coordination point for ADP.

This sequence belongs to the FGGY kinase family.

It carries out the reaction glycerol + ATP = sn-glycerol 3-phosphate + ADP + H(+). The protein operates within polyol metabolism; glycerol degradation via glycerol kinase pathway; sn-glycerol 3-phosphate from glycerol: step 1/1. Its function is as follows. Key enzyme in the regulation of glycerol uptake and metabolism. Catalyzes the phosphorylation of glycerol to yield sn-glycerol 3-phosphate. This chain is Glycerol kinase 1, found in Saccharolobus solfataricus (strain ATCC 35092 / DSM 1617 / JCM 11322 / P2) (Sulfolobus solfataricus).